We begin with the raw amino-acid sequence, 185 residues long: Threonylcarbamoyl-AMP synthase (185 aa).

The YrdC-like domain maps to 1-185 (MDNLQQVVSA…AFSDTVLRQG (185 aa)).

The protein belongs to the SUA5 family. TsaC subfamily.

It localises to the cytoplasm. It catalyses the reaction L-threonine + hydrogencarbonate + ATP = L-threonylcarbamoyladenylate + diphosphate + H2O. Its function is as follows. Required for the formation of a threonylcarbamoyl group on adenosine at position 37 (t(6)A37) in tRNAs that read codons beginning with adenine. Catalyzes the conversion of L-threonine, HCO(3)(-)/CO(2) and ATP to give threonylcarbamoyl-AMP (TC-AMP) as the acyladenylate intermediate, with the release of diphosphate. This Photobacterium profundum (strain SS9) protein is Threonylcarbamoyl-AMP synthase.